A 179-amino-acid chain; its full sequence is Large ribosomal subunit protein uL5 (179 aa).

The protein belongs to the universal ribosomal protein uL5 family. Part of the 50S ribosomal subunit; part of the 5S rRNA/L5/L18/L25 subcomplex. Contacts the 5S rRNA and the P site tRNA. Forms a bridge to the 30S subunit in the 70S ribosome.

Functionally, this is one of the proteins that bind and probably mediate the attachment of the 5S RNA into the large ribosomal subunit, where it forms part of the central protuberance. In the 70S ribosome it contacts protein S13 of the 30S subunit (bridge B1b), connecting the 2 subunits; this bridge is implicated in subunit movement. Contacts the P site tRNA; the 5S rRNA and some of its associated proteins might help stabilize positioning of ribosome-bound tRNAs. The sequence is that of Large ribosomal subunit protein uL5 from Idiomarina loihiensis (strain ATCC BAA-735 / DSM 15497 / L2-TR).